The primary structure comprises 1163 residues: Genome polyprotein (1163 aa).

Residues 1–104 (MSGRKAQGKT…LSSRKRRSYE (104 aa)) are Cytoplasmic-facing. The hydrophobic; homodimerization of capsid protein C stretch occupies residues 38–72 (PGPSRGVQGFIFFFLFNVLTGRKITAHLKKLWRML). Residues 102 to 121 (SYEVLTVQFLILGMLLMTGG) constitute a propeptide, ER anchor for the capsid protein C, removed in mature form by serine protease NS3. A helical transmembrane segment spans residues 105 to 125 (VLTVQFLILGMLLMTGGVTLV). Topologically, residues 126-244 (RKSRWLLLNV…GERQLQKIER (119 aa)) are extracellular. N-linked (GlcNAc...) asparagine; by host glycans are attached at residues N134 and N150. The chain crosses the membrane as a helical span at residues 245 to 265 (WLVRNPFFAVTALAIAYLVGS). Topologically, residues 266-270 (NMTQR) are cytoplasmic. The chain crosses the membrane as a helical span at residues 271–285 (VVIALLVLAVGPAYS). Residues 286-730 (AHCIGITDRD…MVFGSAFQGL (445 aa)) are Extracellular-facing. Disulfide bonds link C288–C315, C345–C406, C359–C390, C377–C401, C467–C568, and C585–C615. The interval 383–396 (DRGWGNGCGLFGKG) is fusion peptide. The helical transmembrane segment at 731–751 (FGGLSWITKVIMGAVLIWVGI) threads the bilayer. The Extracellular segment spans residues 752-757 (NMRNMT). A helical transmembrane segment spans residues 758–778 (MSMSMILVGVIMMFLSLGVGA). Over 779 to 1163 (DQGCAINFGK…RQGPKQILVG (385 aa)) the chain is Extracellular. 6 disulfide bridges follow: C782–C793, C833–C921, C957–C1002, C1058–C1107, C1069–C1091, and C1090–C1094. N-linked (GlcNAc...) asparagine; by host glycosylation is found at N908 and N986.

As to quaternary structure, homodimer. Interacts (via N-terminus) with host EXOC1 (via C-terminus); this interaction results in EXOC1 degradation through the proteasome degradation pathway. Forms heterodimers with envelope protein E in the endoplasmic reticulum and Golgi. In terms of assembly, homodimer; in the endoplasmic reticulum and Golgi. As to quaternary structure, homodimer; Homohexamer when secreted. Interacts with envelope protein E. Post-translationally, specific enzymatic cleavages in vivo yield mature proteins. The nascent capsid protein C contains a C-terminal hydrophobic domain that act as a signal sequence for translocation of prM into the lumen of the ER. Mature capsid protein C is cleaved at a site upstream of this hydrophobic domain by NS3. prM is cleaved in post-Golgi vesicles by a host furin, releasing the mature small envelope protein M, and peptide pr. Non-structural protein 2A-alpha, a C-terminally truncated form of non-structural protein 2A, results from partial cleavage by NS3. Specific enzymatic cleavages in vivo yield mature proteins peptide 2K acts as a signal sequence and is removed from the N-terminus of NS4B by the host signal peptidase in the ER lumen. Signal cleavage at the 2K-4B site requires a prior NS3 protease-mediated cleavage at the 4A-2K site. Cleaved in post-Golgi vesicles by a host furin, releasing the mature small envelope protein M, and peptide pr. This cleavage is incomplete as up to 30% of viral particles still carry uncleaved prM. In terms of processing, N-glycosylated. Post-translationally, N-glycosylated. The excreted form is glycosylated and this is required for efficient secretion of the protein from infected cells.

The protein resides in the virion. The protein localises to the host nucleus. It is found in the host cytoplasm. It localises to the host perinuclear region. Its subcellular location is the secreted. The protein resides in the virion membrane. The protein localises to the host endoplasmic reticulum membrane. Its function is as follows. Plays a role in virus budding by binding to the cell membrane and gathering the viral RNA into a nucleocapsid that forms the core of a mature virus particle. During virus entry, may induce genome penetration into the host cytoplasm after hemifusion induced by the surface proteins. Can migrate to the cell nucleus where it modulates host functions. Functionally, inhibits RNA silencing by interfering with host Dicer. In terms of biological role, prevents premature fusion activity of envelope proteins in trans-Golgi by binding to envelope protein E at pH6.0. After virion release in extracellular space, gets dissociated from E dimers. Acts as a chaperone for envelope protein E during intracellular virion assembly by masking and inactivating envelope protein E fusion peptide. prM is the only viral peptide matured by host furin in the trans-Golgi network probably to avoid catastrophic activation of the viral fusion activity in acidic Golgi compartment prior to virion release. prM-E cleavage is inefficient, and many virions are only partially matured. These uncleaved prM would play a role in immune evasion. Its function is as follows. May play a role in virus budding. Exerts cytotoxic effects by activating a mitochondrial apoptotic pathway through M ectodomain. May display a viroporin activity. Functionally, binds to host cell surface receptor and mediates fusion between viral and cellular membranes. Envelope protein is synthesized in the endoplasmic reticulum in the form of heterodimer with protein prM. They play a role in virion budding in the ER, and the newly formed immature particle is covered with 60 spikes composed of heterodimer between precursor prM and envelope protein E. The virion is transported to the Golgi apparatus where the low pH causes dissociation of PrM-E heterodimers and formation of E homodimers. prM-E cleavage is inefficient, and many virions are only partially matured. These uncleaved prM would play a role in immune evasion. In terms of biological role, involved in immune evasion, pathogenesis and viral replication. Once cleaved off the polyprotein, is targeted to three destinations: the viral replication cycle, the plasma membrane and the extracellular compartment. Essential for viral replication. Required for formation of the replication complex and recruitment of other non-structural proteins to the ER-derived membrane structures. Excreted as a hexameric lipoparticle that plays a role against host immune response. Antagonizing the complement function. Binds to the host macrophages and dendritic cells. Inhibits signal transduction originating from Toll-like receptor 3 (TLR3). Component of the viral RNA replication complex that functions in virion assembly and antagonizes the host immune response. This chain is Genome polyprotein, found in Aedes aegypti (Yellowfever mosquito).